We begin with the raw amino-acid sequence, 160 residues long: Ribosomal RNA large subunit methyltransferase H (160 aa).

Leu-76 and Gly-108 together coordinate S-adenosyl-L-methionine.

It belongs to the RNA methyltransferase RlmH family. Homodimer.

It localises to the cytoplasm. The catalysed reaction is pseudouridine(1915) in 23S rRNA + S-adenosyl-L-methionine = N(3)-methylpseudouridine(1915) in 23S rRNA + S-adenosyl-L-homocysteine + H(+). In terms of biological role, specifically methylates the pseudouridine at position 1915 (m3Psi1915) in 23S rRNA. This Nitrobacter hamburgensis (strain DSM 10229 / NCIMB 13809 / X14) protein is Ribosomal RNA large subunit methyltransferase H.